Consider the following 218-residue polypeptide: Elongation factor Ts (218 aa).

The involved in Mg(2+) ion dislocation from EF-Tu stretch occupies residues 82 to 85 (TDFV).

This sequence belongs to the EF-Ts family.

The protein resides in the cytoplasm. Functionally, associates with the EF-Tu.GDP complex and induces the exchange of GDP to GTP. It remains bound to the aminoacyl-tRNA.EF-Tu.GTP complex up to the GTP hydrolysis stage on the ribosome. The protein is Elongation factor Ts of Prochlorococcus marinus (strain AS9601).